A 178-amino-acid polypeptide reads, in one-letter code: ATP synthase subunit delta (178 aa).

It belongs to the ATPase delta chain family. F-type ATPases have 2 components, F(1) - the catalytic core - and F(0) - the membrane proton channel. F(1) has five subunits: alpha(3), beta(3), gamma(1), delta(1), epsilon(1). F(0) has three main subunits: a(1), b(2) and c(10-14). The alpha and beta chains form an alternating ring which encloses part of the gamma chain. F(1) is attached to F(0) by a central stalk formed by the gamma and epsilon chains, while a peripheral stalk is formed by the delta and b chains.

Its subcellular location is the cell inner membrane. Its function is as follows. F(1)F(0) ATP synthase produces ATP from ADP in the presence of a proton or sodium gradient. F-type ATPases consist of two structural domains, F(1) containing the extramembraneous catalytic core and F(0) containing the membrane proton channel, linked together by a central stalk and a peripheral stalk. During catalysis, ATP synthesis in the catalytic domain of F(1) is coupled via a rotary mechanism of the central stalk subunits to proton translocation. Functionally, this protein is part of the stalk that links CF(0) to CF(1). It either transmits conformational changes from CF(0) to CF(1) or is implicated in proton conduction. This is ATP synthase subunit delta from Pelodictyon phaeoclathratiforme (strain DSM 5477 / BU-1).